The primary structure comprises 239 residues: Small ribosomal subunit protein uS2 (239 aa).

The protein belongs to the universal ribosomal protein uS2 family.

The chain is Small ribosomal subunit protein uS2 from Prochlorococcus marinus (strain MIT 9303).